The chain runs to 422 residues: Gamma-glutamyl phosphate reductase (422 aa).

Belongs to the gamma-glutamyl phosphate reductase family.

Its subcellular location is the cytoplasm. The catalysed reaction is L-glutamate 5-semialdehyde + phosphate + NADP(+) = L-glutamyl 5-phosphate + NADPH + H(+). It participates in amino-acid biosynthesis; L-proline biosynthesis; L-glutamate 5-semialdehyde from L-glutamate: step 2/2. In terms of biological role, catalyzes the NADPH-dependent reduction of L-glutamate 5-phosphate into L-glutamate 5-semialdehyde and phosphate. The product spontaneously undergoes cyclization to form 1-pyrroline-5-carboxylate. This Chlorobium phaeovibrioides (strain DSM 265 / 1930) (Prosthecochloris vibrioformis (strain DSM 265)) protein is Gamma-glutamyl phosphate reductase.